Here is a 374-residue protein sequence, read N- to C-terminus: MSAIFSFQSLARCSQTKARSGIFLTPHGIVETPRFMPVGTLANVKTVTPAQLKETGAQMVLSNTYHLHLQPGEAIVAGGGGLHKFMGWNGPMLTDSGGFQVFSLSEMRKITEEGVTFRSPRDGQIIKLTPERSIEIQNILGADVIMAFDECPPYPANRQEVEAATERTYRWLERCITAHQRQDQALFGIVQGGVYLDLRAKAANTLTELDLPGYAIGGVSVGEPPEMMAQIVQATAPLLPAHKPRYLMGVGTYREMVIAIASGIDLFDCVIPTRWARHGTAMVKGERWNLKNAKFREDFAPIDETCPCYACQNFSRAYISHLVRSQEILAYTLLSIHNITELIRFTQKIREAILSDRFLEEFGHWLNSAETDNR.

The active-site Proton acceptor is the Asp95. Residues 95-99, Asp149, Gln191, and Gly218 contribute to the substrate site; that span reads DSGGF. Residues 249 to 255 are RNA binding; that stretch reads GVGTYRE. The active-site Nucleophile is Asp268. The interval 273–277 is RNA binding; important for wobble base 34 recognition; that stretch reads TRWAR. Cys306, Cys308, Cys311, and His337 together coordinate Zn(2+).

This sequence belongs to the queuine tRNA-ribosyltransferase family. In terms of assembly, homodimer. Within each dimer, one monomer is responsible for RNA recognition and catalysis, while the other monomer binds to the replacement base PreQ1. Zn(2+) is required as a cofactor.

The enzyme catalyses 7-aminomethyl-7-carbaguanine + guanosine(34) in tRNA = 7-aminomethyl-7-carbaguanosine(34) in tRNA + guanine. It participates in tRNA modification; tRNA-queuosine biosynthesis. Functionally, catalyzes the base-exchange of a guanine (G) residue with the queuine precursor 7-aminomethyl-7-deazaguanine (PreQ1) at position 34 (anticodon wobble position) in tRNAs with GU(N) anticodons (tRNA-Asp, -Asn, -His and -Tyr). Catalysis occurs through a double-displacement mechanism. The nucleophile active site attacks the C1' of nucleotide 34 to detach the guanine base from the RNA, forming a covalent enzyme-RNA intermediate. The proton acceptor active site deprotonates the incoming PreQ1, allowing a nucleophilic attack on the C1' of the ribose to form the product. After dissociation, two additional enzymatic reactions on the tRNA convert PreQ1 to queuine (Q), resulting in the hypermodified nucleoside queuosine (7-(((4,5-cis-dihydroxy-2-cyclopenten-1-yl)amino)methyl)-7-deazaguanosine). This chain is Queuine tRNA-ribosyltransferase, found in Nostoc sp. (strain PCC 7120 / SAG 25.82 / UTEX 2576).